A 188-amino-acid polypeptide reads, in one-letter code: uncharacterized protein (188 aa).

The first 23 residues, 1-23, serve as a signal peptide directing secretion; the sequence is MFKGQKTLAALAVSLLFTAPVYA. The cysteines at positions 42 and 81 are disulfide-linked.

This sequence belongs to the fimbrial protein family.

It localises to the fimbrium. This is an uncharacterized protein from Escherichia coli (strain K12).